Consider the following 593-residue polypeptide: Actin-histidine N-methyltransferase (593 aa).

The tract at residues 1–21 is disordered; that stretch reads MGKKSRVKTQKSGTGATAAVS. S-adenosyl-L-methionine is bound by residues Arg75, 104–106, Arg254, 275–279, and 325–327; these read EGF, DMCNH, and SGF. An SET domain is found at 94–314; it reads EGFEIANFEE…AGEQIYIFYG (221 aa). Residues 549 to 593 are disordered; sequence GFVNGENSLFNGTKSESENLIKEESNRETEDAKESSSESTDEVKE. Over residues 553 to 562 the composition is skewed to polar residues; the sequence is GENSLFNGTK. The span at 563 to 593 shows a compositional bias: basic and acidic residues; the sequence is SESENLIKEESNRETEDAKESSSESTDEVKE.

It belongs to the class V-like SAM-binding methyltransferase superfamily. SETD3 actin-histidine methyltransferase family.

It is found in the cytoplasm. It catalyses the reaction L-histidyl-[protein] + S-adenosyl-L-methionine = N(tele)-methyl-L-histidyl-[protein] + S-adenosyl-L-homocysteine + H(+). In terms of biological role, protein-histidine N-methyltransferase that specifically mediates 3-methylhistidine (tele-methylhistidine) methylation of actin at 'His-73'. Does not have protein-lysine N-methyltransferase activity and probably only catalyzes histidine methylation of actin. This chain is Actin-histidine N-methyltransferase, found in Gallus gallus (Chicken).